An 806-amino-acid polypeptide reads, in one-letter code: NADH-quinone oxidoreductase subunit G (806 aa).

Residues 15 to 93 (EMVTLTIDGV…DMVVRTQLTS (79 aa)) form the 2Fe-2S ferredoxin-type domain. 4 residues coordinate [2Fe-2S] cluster: cysteine 49, cysteine 60, cysteine 63, and cysteine 77. In terms of domain architecture, 4Fe-4S His(Cys)3-ligated-type spans 95–134 (IADKAQHGVMELLLINHPLDCPMCDKGGECPLQNQAMSNG). [4Fe-4S] cluster contacts are provided by histidine 111, cysteine 115, cysteine 118, cysteine 124, cysteine 164, cysteine 167, cysteine 170, cysteine 214, cysteine 240, cysteine 243, cysteine 247, and cysteine 275. The 57-residue stretch at 233–289 (LVSSPSVCEHCASGCAQRTDHRRGKVLRRLAGDDPEVNEEWNCDKGRWAFTYATQPD) folds into the 4Fe-4S Mo/W bis-MGD-type domain.

Belongs to the complex I 75 kDa subunit family. [2Fe-2S] cluster serves as cofactor. The cofactor is [4Fe-4S] cluster.

The catalysed reaction is a quinone + NADH + 5 H(+)(in) = a quinol + NAD(+) + 4 H(+)(out). Functionally, NDH-1 shuttles electrons from NADH, via FMN and iron-sulfur (Fe-S) centers, to quinones in the respiratory chain. The immediate electron acceptor for the enzyme in this species is believed to be menaquinone. Couples the redox reaction to proton translocation (for every two electrons transferred, four hydrogen ions are translocated across the cytoplasmic membrane), and thus conserves the redox energy in a proton gradient. In Mycobacterium bovis (strain ATCC BAA-935 / AF2122/97), this protein is NADH-quinone oxidoreductase subunit G (nuoG).